Reading from the N-terminus, the 392-residue chain is 23S rRNA (uracil(747)-C(5))-methyltransferase RlmC (392 aa).

[4Fe-4S] cluster contacts are provided by C4, C12, C15, and C93. Residues Q218, F247, E275, and N321 each contribute to the S-adenosyl-L-methionine site. C348 (nucleophile) is an active-site residue.

It belongs to the class I-like SAM-binding methyltransferase superfamily. RNA M5U methyltransferase family. RlmC subfamily.

It catalyses the reaction uridine(747) in 23S rRNA + S-adenosyl-L-methionine = 5-methyluridine(747) in 23S rRNA + S-adenosyl-L-homocysteine + H(+). Catalyzes the formation of 5-methyl-uridine at position 747 (m5U747) in 23S rRNA. The protein is 23S rRNA (uracil(747)-C(5))-methyltransferase RlmC of Haemophilus influenzae (strain 86-028NP).